The sequence spans 273 residues: Dermonecrotic toxin LhSicTox-alphaIA1iii (273 aa).

His-5 is an active-site residue. Mg(2+)-binding residues include Glu-25 and Asp-27. His-41 functions as the Nucleophile in the catalytic mechanism. 2 disulfide bridges follow: Cys-45–Cys-51 and Cys-47–Cys-190. Asp-85 is a binding site for Mg(2+).

It belongs to the arthropod phospholipase D family. Class II subfamily. Requires Mg(2+) as cofactor. In terms of tissue distribution, expressed by the venom gland.

The protein localises to the secreted. The enzyme catalyses an N-(acyl)-sphingosylphosphocholine = an N-(acyl)-sphingosyl-1,3-cyclic phosphate + choline. The catalysed reaction is an N-(acyl)-sphingosylphosphoethanolamine = an N-(acyl)-sphingosyl-1,3-cyclic phosphate + ethanolamine. It catalyses the reaction a 1-acyl-sn-glycero-3-phosphocholine = a 1-acyl-sn-glycero-2,3-cyclic phosphate + choline. It carries out the reaction a 1-acyl-sn-glycero-3-phosphoethanolamine = a 1-acyl-sn-glycero-2,3-cyclic phosphate + ethanolamine. Functionally, dermonecrotic toxins cleave the phosphodiester linkage between the phosphate and headgroup of certain phospholipids (sphingolipid and lysolipid substrates), forming an alcohol (often choline) and a cyclic phosphate. This toxin acts on sphingomyelin (SM). It may also act on ceramide phosphoethanolamine (CPE), lysophosphatidylcholine (LPC) and lysophosphatidylethanolamine (LPE), but not on lysophosphatidylserine (LPS), and lysophosphatidylglycerol (LPG). It acts by transphosphatidylation, releasing exclusively cyclic phosphate products as second products. Induces dermonecrosis, hemolysis, increased vascular permeability, edema, inflammatory response, and platelet aggregation. The polypeptide is Dermonecrotic toxin LhSicTox-alphaIA1iii (Loxosceles hirsuta (Recluse spider)).